The sequence spans 155 residues: Ribosomal RNA large subunit methyltransferase H (155 aa).

Residues Leu-73, Gly-104, and 123 to 128 (LSPLTL) each bind S-adenosyl-L-methionine.

The protein belongs to the RNA methyltransferase RlmH family. Homodimer.

The protein localises to the cytoplasm. It carries out the reaction pseudouridine(1915) in 23S rRNA + S-adenosyl-L-methionine = N(3)-methylpseudouridine(1915) in 23S rRNA + S-adenosyl-L-homocysteine + H(+). Its function is as follows. Specifically methylates the pseudouridine at position 1915 (m3Psi1915) in 23S rRNA. The chain is Ribosomal RNA large subunit methyltransferase H from Pseudomonas entomophila (strain L48).